The sequence spans 472 residues: Type I restriction enzyme BthVORF4518P methylase subunit (472 aa).

S-adenosyl-L-methionine-binding positions include Gln151 to Arg156, Thr181 to Gly183, Asp214, and Asp243 to Ser244.

It belongs to the N(4)/N(6)-methyltransferase family. In terms of assembly, the type I restriction/modification system is composed of three polypeptides R, M and S; the restriction enzyme has stoichiometry R(2)M(2)S(1) while the methyltransferase is M(2)S(1).

The enzyme catalyses a 2'-deoxyadenosine in DNA + S-adenosyl-L-methionine = an N(6)-methyl-2'-deoxyadenosine in DNA + S-adenosyl-L-homocysteine + H(+). In terms of biological role, the subtype gamma methyltransferase (M) subunit of a type I restriction enzyme. The M and S subunits together form a methyltransferase (MTase) that methylates two adenine residues of an undetermined sequence. In the presence of the R subunit the complex can also act as an endonuclease, binding to the same target sequence but cutting the DNA some distance from this site. Whether the DNA is cut or modified depends on the methylation state of the target sequence. When the target site is unmodified, the DNA is cut. When the target site is hemimethylated, the complex acts as a maintenance MTase modifying the DNA so that both strands become methylated. After locating a non-methylated recognition site, the enzyme complex serves as a molecular motor that translocates DNA in an ATP-dependent manner until a collision occurs that triggers cleavage. This chain is Type I restriction enzyme BthVORF4518P methylase subunit, found in Bacteroides thetaiotaomicron (strain ATCC 29148 / DSM 2079 / JCM 5827 / CCUG 10774 / NCTC 10582 / VPI-5482 / E50).